Consider the following 710-residue polypeptide: Polyribonucleotide nucleotidyltransferase (710 aa).

Residues Asp-489 and Asp-495 each coordinate Mg(2+). Residues 556–615 (PKIDTIKIDVDKIKVVIGKGGETIDKIIAETGVKIDIDDEGNVSIYSSDQAAIDRTKEII) form the KH domain. Residues 625–693 (GEVYHAKVVR…EKGRVDASMK (69 aa)) enclose the S1 motif domain. Residues 691 to 710 (SMKALIPRPPKPEKKEEKHD) form a disordered region. Positions 700-710 (PKPEKKEEKHD) are enriched in basic and acidic residues.

This sequence belongs to the polyribonucleotide nucleotidyltransferase family. The cofactor is Mg(2+).

The protein resides in the cytoplasm. It catalyses the reaction RNA(n+1) + phosphate = RNA(n) + a ribonucleoside 5'-diphosphate. Involved in mRNA degradation. Catalyzes the phosphorolysis of single-stranded polyribonucleotides processively in the 3'- to 5'-direction. The polypeptide is Polyribonucleotide nucleotidyltransferase (Streptococcus pyogenes serotype M49 (strain NZ131)).